The chain runs to 203 residues: MFEGPVQDLIDELGKLPGIGPKSAQRIAFHLLSVEPPDIDRLTAVLARVRDGVRFCAVCGNVSDDERCRICSDPRRDASVVCVVEEPKDVQAVERTREFRGRYHVLGGALDPLSGVGPDQLRIRELLSRIGERVDDVDITEVIIATDPNTEGEATATYLVRMLRDIPGLTVTRIASGLPMGGDLEFADELTLGRALAGRRAMV.

The C4-type zinc finger occupies 56 to 71 (CAVCGNVSDDERCRIC). One can recognise a Toprim domain in the interval 79–179 (SVVCVVEEPK…TVTRIASGLP (101 aa)).

It belongs to the RecR family.

In terms of biological role, may play a role in DNA repair. It seems to be involved in an RecBC-independent recombinational process of DNA repair. It may act with RecF and RecO. In Mycobacterium avium (strain 104), this protein is Recombination protein RecR.